The primary structure comprises 225 residues: Uridylate kinase (225 aa).

9–10 (GS) provides a ligand contact to ATP. A UMP-binding site is contributed by Gly-44. ATP contacts are provided by Gly-45 and Arg-49. UMP contacts are provided by residues Asp-66 and 114 to 120 (THPGHTT). ATP is bound by residues Thr-140, Asn-141, Tyr-146, and Asp-149.

This sequence belongs to the UMP kinase family. As to quaternary structure, homohexamer.

It localises to the cytoplasm. It catalyses the reaction UMP + ATP = UDP + ADP. It participates in pyrimidine metabolism; CTP biosynthesis via de novo pathway; UDP from UMP (UMPK route): step 1/1. Inhibited by UTP. Its function is as follows. Catalyzes the reversible phosphorylation of UMP to UDP. This is Uridylate kinase from Thermococcus gammatolerans (strain DSM 15229 / JCM 11827 / EJ3).